The following is a 327-amino-acid chain: Glycerol-3-phosphate acyltransferase (327 aa).

The next 5 membrane-spanning stretches (helical) occupy residues 3 to 23, 52 to 72, 78 to 98, 112 to 132, and 152 to 172; these read SLLW…LLFA, VGVL…AVAL, TVFH…SCFL, VFLP…LAVI, and MLLL…MVLV. 2 disordered regions span residues 184–212 and 233–327; these read SRGE…EAAA and PSTE…SSGQ. A compositionally biased stretch (low complexity) spans 199-212; the sequence is AQGTDAGAAPEAAA. A compositionally biased stretch (polar residues) spans 237 to 246; it reads AAPSQETSDA. The span at 259–271 shows a compositional bias: basic and acidic residues; sequence EGDKRENEEHDNA.

The protein belongs to the PlsY family. As to quaternary structure, probably interacts with PlsX.

Its subcellular location is the cell inner membrane. It catalyses the reaction an acyl phosphate + sn-glycerol 3-phosphate = a 1-acyl-sn-glycero-3-phosphate + phosphate. It functions in the pathway lipid metabolism; phospholipid metabolism. Functionally, catalyzes the transfer of an acyl group from acyl-phosphate (acyl-PO(4)) to glycerol-3-phosphate (G3P) to form lysophosphatidic acid (LPA). This enzyme utilizes acyl-phosphate as fatty acyl donor, but not acyl-CoA or acyl-ACP. This is Glycerol-3-phosphate acyltransferase from Nitratidesulfovibrio vulgaris (strain ATCC 29579 / DSM 644 / CCUG 34227 / NCIMB 8303 / VKM B-1760 / Hildenborough) (Desulfovibrio vulgaris).